Reading from the N-terminus, the 185-residue chain is Shikimate kinase (185 aa).

15–20 provides a ligand contact to ATP; sequence GAGKST. Ser19 provides a ligand contact to Mg(2+). Residues Asp37, Arg61, and Gly83 each coordinate substrate. Position 121 (Arg121) interacts with ATP. Arg146 serves as a coordination point for substrate.

The protein belongs to the shikimate kinase family. Monomer. It depends on Mg(2+) as a cofactor.

Its subcellular location is the cytoplasm. The catalysed reaction is shikimate + ATP = 3-phosphoshikimate + ADP + H(+). It participates in metabolic intermediate biosynthesis; chorismate biosynthesis; chorismate from D-erythrose 4-phosphate and phosphoenolpyruvate: step 5/7. In terms of biological role, catalyzes the specific phosphorylation of the 3-hydroxyl group of shikimic acid using ATP as a cosubstrate. In Blochmanniella floridana, this protein is Shikimate kinase.